The primary structure comprises 234 residues: Thrombin-like enzyme acutin (234 aa).

A propeptide is located at residue methionine 1. Residues 2–225 (VIGGDECDIN…YTDWIQRNIA (224 aa)) form the Peptidase S1 domain. Intrachain disulfides connect cysteine 8–cysteine 140, cysteine 27–cysteine 43, cysteine 75–cysteine 232, cysteine 119–cysteine 186, cysteine 151–cysteine 165, and cysteine 176–cysteine 201. Residue asparagine 21 is glycosylated (N-linked (GlcNAc...) asparagine). Catalysis depends on charge relay system residues histidine 42 and aspartate 87. The active-site Charge relay system is serine 180.

Belongs to the peptidase S1 family. Snake venom subfamily. Monomer. In terms of tissue distribution, expressed by the venom gland.

The protein localises to the secreted. Thrombin-like snake venom serine protease. Has arginyl esterase and fibrinogen clotting activities. The protein is Thrombin-like enzyme acutin of Deinagkistrodon acutus (Hundred-pace snake).